The following is a 261-amino-acid chain: Ribosomal RNA small subunit methyltransferase J (261 aa).

S-adenosyl-L-methionine contacts are provided by residues 111 to 112 (RD), 127 to 128 (ER), 163 to 164 (SS), and D181.

It belongs to the methyltransferase superfamily. RsmJ family.

The protein localises to the cytoplasm. It carries out the reaction guanosine(1516) in 16S rRNA + S-adenosyl-L-methionine = N(2)-methylguanosine(1516) in 16S rRNA + S-adenosyl-L-homocysteine + H(+). Its function is as follows. Specifically methylates the guanosine in position 1516 of 16S rRNA. This Shewanella sp. (strain MR-7) protein is Ribosomal RNA small subunit methyltransferase J.